The chain runs to 193 residues: MWLIAGLGNPGLQYQNNRHNIGFMVIDAIYQSFSFSPWSKKFQAEISNGLIDGEKTFLIKPQTFMNLSGQAIGEVLRFYKLDLKNFIVICDELDLPPGKVRVKTAGGNNGHNGIKSIDAHCGTDYCRVRLGIGHPGSKELVHQHVLGNFTKSDQEWLSPLLDAIAKNIALLIKGDRCLFMDTISQATKNKNLQ.

TRNA is bound at residue tyrosine 14. The active-site Proton acceptor is the histidine 19. Residues phenylalanine 64, asparagine 66, and asparagine 112 each coordinate tRNA.

Belongs to the PTH family. In terms of assembly, monomer.

It is found in the cytoplasm. The catalysed reaction is an N-acyl-L-alpha-aminoacyl-tRNA + H2O = an N-acyl-L-amino acid + a tRNA + H(+). In terms of biological role, hydrolyzes ribosome-free peptidyl-tRNAs (with 1 or more amino acids incorporated), which drop off the ribosome during protein synthesis, or as a result of ribosome stalling. Catalyzes the release of premature peptidyl moieties from peptidyl-tRNA molecules trapped in stalled 50S ribosomal subunits, and thus maintains levels of free tRNAs and 50S ribosomes. The polypeptide is Peptidyl-tRNA hydrolase (Bartonella quintana (strain Toulouse) (Rochalimaea quintana)).